An 830-amino-acid polypeptide reads, in one-letter code: AdoMet-dependent rRNA methyltransferase SPB1 (830 aa).

Residues Gly58, Trp60, Asp78, Asp94, and Asp119 each coordinate S-adenosyl-L-methionine. Residue Lys159 is the Proton acceptor of the active site. Positions 345–388 form a coiled coil; the sequence is LTEEEQIEKELQEMQQKQNLKKKREKRKQNEIKQKEITRMQMQM. Disordered stretches follow at residues 485–529 and 565–642; these read AKEA…SDSD and EADL…AREV. Acidic residues-rich tracts occupy residues 516–529, 591–610, and 618–630; these read VDDDDSDVSDSDSD, VSEESSSDEEEAEEESDSDF, and DESDDDYDSEDEA. Over residues 631 to 642 the composition is skewed to basic and acidic residues; it reads ERSQKEKHAREV.

Belongs to the class I-like SAM-binding methyltransferase superfamily. RNA methyltransferase RlmE family. SPB1 subfamily. As to quaternary structure, component of the nucleolar and nucleoplasmic pre-60S ribosomal particle.

It is found in the nucleus. The protein localises to the nucleolus. It carries out the reaction a ribonucleotide in rRNA + S-adenosyl-L-methionine = a 2'-O-methylribonucleotide in rRNA + S-adenosyl-L-homocysteine + H(+). Its function is as follows. Required for proper assembly of pre-ribosomal particles during the biogenesis of the 60S ribosomal subunit. This is AdoMet-dependent rRNA methyltransferase SPB1 from Eremothecium gossypii (strain ATCC 10895 / CBS 109.51 / FGSC 9923 / NRRL Y-1056) (Yeast).